A 633-amino-acid polypeptide reads, in one-letter code: Transcriptional repressor p66-alpha (633 aa).

Residues 1–18 (MTEEACRTRSQKRALERD) are compositionally biased toward basic and acidic residues. Disordered regions lie at residues 1 to 59 (MTEE…PTQG) and 73 to 119 (RGEG…RVNG). A phosphothreonine mark is found at T20 and T49. The span at 86–99 (RTSHSDMKSERRPP) shows a compositional bias: basic and acidic residues. Residue K93 forms a Glycyl lysine isopeptide (Lys-Gly) (interchain with G-Cter in SUMO2) linkage. A phosphoserine mark is found at S100, S107, S113, S114, and S137. Over residues 108–119 (DNEQPSSPRVNG) the composition is skewed to polar residues. Positions 139 to 174 (EERERMIKQLKEELRLEEAKLVLLKKLRQSQIQKEA) form a coiled coil. Residues 144–178 (MIKQLKEELRLEEAKLVLLKKLRQSQIQKEATAQK) are CR1; interaction with HDAC1, HDAC2, MBD2 and MTA2. Polar residues predominate over residues 172-188 (KEATAQKPTGSVGSTVT). The interval 172–238 (KEATAQKPTG…QASSKLGPQA (67 aa)) is disordered. Residue K178 forms a Glycyl lysine isopeptide (Lys-Gly) (interchain with G-Cter in SUMO2) linkage. An interaction with ZMYND8 region spans residues 181-295 (GSVGSTVTTP…IIQQGLIRVA (115 aa)). A Phosphothreonine modification is found at T189. Polar residues predominate over residues 196–212 (GTQNIPAGKPSLQTSSA). K204 is covalently cross-linked (Glycyl lysine isopeptide (Lys-Gly) (interchain with G-Cter in SUMO2)). Residue R225 is modified to Omega-N-methylarginine. A compositionally biased stretch (polar residues) spans 228-238 (QQASSKLGPQA). K233 participates in a covalent cross-link: Glycyl lysine isopeptide (Lys-Gly) (interchain with G-Cter in SUMO2). Omega-N-methylarginine is present on residues R249, R258, and R273. S275 is modified (phosphoserine). R285 bears the Omega-N-methylarginine mark. A phosphoserine mark is found at S340 and S343. Positions 340–480 (SPASRQAAAK…EIEQRLLQQG (141 aa)) are CR2; histone tail-binding and interaction with CHD4 and CDK2AP1. The segment at 411–464 (SREPYMCAQCKTDFTCRWREEKSGAIMCENCMTTNQKKALKVEHTSRLKAAFVK) adopts a GATA-type zinc-finger fold. Residues K464 and K487 each participate in a glycyl lysine isopeptide (Lys-Gly) (interchain with G-Cter in SUMO2) cross-link. Phosphoserine is present on S512. R539 is modified (asymmetric dimethylarginine; alternate). R539 is modified (omega-N-methylarginine; alternate). Phosphoserine is present on residues S546 and S548. K550 participates in a covalent cross-link: Glycyl lysine isopeptide (Lys-Gly) (interchain with G-Cter in SUMO2). Residue S556 is modified to Phosphoserine. Residues 561–585 (VSRTGRHSERTVSAGKGSATSNWKK) are disordered. A Glycyl lysine isopeptide (Lys-Gly) (interchain with G-Cter in SUMO2) cross-link involves residue K585. At S598 the chain carries Phosphoserine. K605 is covalently cross-linked (Glycyl lysine isopeptide (Lys-Gly) (interchain with G-Cter in SUMO2)).

In terms of assembly, homooligomer. Component of the nucleosome remodeling and deacetylase (NuRD) repressor complex, composed of core proteins MTA1, MTA2, MTA3, RBBP4, RBBP7, HDAC1, HDAC2, MBD2, MBD3, and peripherally associated proteins CDK2AP1, CDK2AP2, GATAD2A, GATAD2B, CHD3, CHD4 and CHD5. The exact stoichiometry of the NuRD complex is unknown, and some subunits such as MBD2 and MBD3, GATAD2A and GATAD2B, and CHD3, CHD4 and CHD5 define mutually exclusive NuRD complexes. Component of the MeCP1 histone deacetylase complex. Interacts with CDK2AP1. Interacts with CHD4. Interacts with ERCC6. Interacts with HDAC1. Interacts with HDAC2. Interacts with MBD2; this interaction is required for the enhancement of MBD2-mediated repression and for targeting to the chromatin. Interacts with MBD3. Interacts with MTA2. Interacts with ZMYND8. Interacts with histone tails, including that of histones H2A, H2B, H3 and H4, the interaction is reduced by histone acetylation. Ubiquitous, both in fetal and adult tissues.

Its subcellular location is the nucleus speckle. It is found in the nucleus. It localises to the chromosome. Functionally, transcriptional repressor. Acts as a component of the histone deacetylase NuRD complex which participates in the remodeling of chromatin. Enhances MBD2-mediated repression. Efficient repression requires the presence of GATAD2B. In Homo sapiens (Human), this protein is Transcriptional repressor p66-alpha (GATAD2A).